The chain runs to 644 residues: MKKETIFSEVETANSKQLAVLKANFPQCFDKNGAFIQEKLLEIIRASEVELSKESYSLNWLGKSYARLLANLPPKTLLAEDKTHNQQEENKNSQHLLIKGDNLEVLKHMVNAYAEKVKMIYIDPPYNTGKDGFVYNDDRKFTPEQLSELAGIDLDEAKRILEFTTKGSSSHSAWLTFIYPRLYIARELMREDGTIFISIDHNEFSQLKLVCDEIFGEQNHVGDLVWKNATDNNPSNIAVEHEYIIVYTKNKEQLISEWKSNISDVKNLLVNIGEEFASKYTGNELQEKYTQWFREHRSELWPLDRYKYIDKDGIYTGSQSVHNPGKEGYRYDIIHPKTKKPCKQPLMGYRFPLDTMDRLLSEEKIIFGDDENKIIELKVYAKDYKQKLSSVIHLDGRVATNELKELFPEMTQPFTNAKTIKLVEDLISFACDGEGIVLDFFAGSGTTAHTVFNLNNKNKTSYQFITVQLDEPTKDKSDAMKHGYNTIFDLTKERLIRASKKNRDQGFKVYQLMPDFRAKDESELTLSNHTFFDDVVLTPEQYDTLLTTWCLYDGSLLTTPIEDVDLGGYKAHLCDGRLYLIAPNFTSEALKALLQKVDSDKDFAPNKVVFYGSNFESAKQMELNEALKSYANKKSIELDLVVRN.

Positions 123 to 126 (DPPY) are binding of S-adenosyl methionine.

Belongs to the N(4)/N(6)-methyltransferase family. Forms a homodimer capable of methylating the target sequence in the absence of Res. A heterotetramer with stoichiometry Res(2)Mod(2). A heterotrimer with stoichiometry Res(1)Mod(2).

The enzyme catalyses a 2'-deoxyadenosine in DNA + S-adenosyl-L-methionine = an N(6)-methyl-2'-deoxyadenosine in DNA + S-adenosyl-L-homocysteine + H(+). A beta subtype methylase that binds the system-specific DNA recognition site 5'-CAGCAG-3' and methylates A-5 (of only 1 strand as the other does not have an A residue). DNA restriction requires both the Res and Mod subunits. The A-5 nucleotide flips into the catalytic pocket of one Mod subunit for modification, while the other Mod subunit makes most of the DNA sequence-specific contacts. This Escherichia coli protein is Type III restriction-modification enzyme EcoP15I Mod subunit.